We begin with the raw amino-acid sequence, 622 residues long: Probable ATP-dependent RNA helicase DDX41 (622 aa).

The segment covering 1 to 15 has biased composition (basic and acidic residues); the sequence is MEESEPERKRARTDE. Disordered regions lie at residues 1–39 and 52–84; these read MEES…YVPL and QRRR…PQSN. Ser-4 bears the Phosphoserine mark. Lys-9 carries the N6-acetyllysine modification. A Glycyl lysine isopeptide (Lys-Gly) (interchain with G-Cter in ubiquitin) cross-link involves residue Lys-9. A phosphoserine mark is found at Ser-21 and Ser-23. Phosphotyrosine is present on Tyr-33. Lys-115 is covalently cross-linked (Glycyl lysine isopeptide (Lys-Gly) (interchain with G-Cter in ubiquitin)). The short motif at 181–209 is the Q motif element; that stretch reads KSFKEMKFPAAILRGLKKKGIHHPTPIQI. Positions 212-396 constitute a Helicase ATP-binding domain; the sequence is IPTILSGRDM…KSALVKPVTI (185 aa). Residue 225 to 232 participates in ATP binding; that stretch reads AFTGSGKT. A DEAD box motif is present at residues 344 to 347; sequence DEAD. Residues 407 to 567 form the Helicase C-terminal domain; that stretch reads DVIQEVEYVK…KVPPVLQVLH (161 aa). Position 414 is a phosphotyrosine; by BTK (Tyr-414). Glycyl lysine isopeptide (Lys-Gly) (interchain with G-Cter in SUMO2) cross-links involve residues Lys-416 and Lys-442. Residues 580–597 form a CCHC-type zinc finger; it reads RGCAFCGGLGHRITDCPK.

Belongs to the DEAD box helicase family. DDX41 subfamily. Identified in the spliceosome C complex. Interacts with ERCC6. Interacts with FAM50A. Interacts with STING1. Interacts with CGAS. Interacts with several spliceosomes components such as PRP19 or CDC5L. In terms of processing, acetylation at Lys-9 regulates the nuclear/cytoplasmic localization. Phosphorylated by BTK; phosphorylation induces binding to dsDNA and STING1. Post-translationally, 'Lys-48'-linked ubiquitinated and degraded by TRIM21 leading to negative regulation of the innate immune response to intracellular dsDNA.

Its subcellular location is the nucleus. The protein resides in the cytoplasm. The catalysed reaction is ATP + H2O = ADP + phosphate + H(+). Its function is as follows. Multifunctional protein that participates in many aspects of cellular RNA metabolism. Plays pivotal roles in innate immune sensing and hematopoietic homeostasis. Recognizes foreign or self-nucleic acids generated during microbial infection, thereby initiating anti-pathogen responses. Mechanistically, phosphorylation by BTK allows binding to dsDNA leading to interaction with STING1. Modulates the homeostasis of dsDNA through its ATP-dependent DNA-unwinding activity and ATP-independent strand-annealing activity. In turn, induces STING1-mediated type I interferon and cytokine responses to DNA and DNA viruses. Selectively modulates the transcription of certain immunity-associated genes by regulating their alternative splicing. Binds to RNA (R)-loops, structures consisting of DNA/RNA hybrids and a displaced strand of DNA that occur during transcription, and prevents their accumulation, thereby maintaining genome stability. Also participates in pre-mRNA splicing, translational regulation and snoRNA processing, which is essential for ribosome biogenesis. The protein is Probable ATP-dependent RNA helicase DDX41 (DDX41) of Homo sapiens (Human).